The sequence spans 331 residues: MFIKWGDRLMTKTLHLTKVTIRNFRSIKVAHINNIGDIAVFVGANESGKSNILKALNWFGTDKPLGGDDIPVEFLGKENKEYSKKPIIEAYFEIVNKDKFKEKIISNIKEILEVIKVDINEDILINFEDMLNKIQFLKFEKYADGLFKTYIYDDQLEDITKEFYDCFKNVISKKTPLDLFNLIYEEVLKEEVKKQNIPENQISNAVANIRGNPNFNNHYRKILDEIRTLNTFEEFYEICKRIENIVKSIPNTSVSISIPGRNIQLNPYNIFTEILTKFNSIVTIAFINLKPKFVYLDEEMELKGAVIKNTSWSNTLKEENKTTLLMPDFLE.

43–50 is an ATP binding site; it reads GANESGKS.

This is an uncharacterized protein from Methanocaldococcus jannaschii (strain ATCC 43067 / DSM 2661 / JAL-1 / JCM 10045 / NBRC 100440) (Methanococcus jannaschii).